The chain runs to 201 residues: L(+)-tartrate dehydratase subunit beta (201 aa).

His37 is an active-site residue.

This sequence belongs to the class-I fumarase family. In terms of assembly, heterotetramer of two alpha and two beta subunits.

The enzyme catalyses (2R,3R)-tartrate = oxaloacetate + H2O. This Escherichia coli O6:K15:H31 (strain 536 / UPEC) protein is L(+)-tartrate dehydratase subunit beta (ttdB).